The primary structure comprises 130 residues: Large ribosomal subunit protein bL12 (130 aa).

This sequence belongs to the bacterial ribosomal protein bL12 family. In terms of assembly, homodimer. Part of the ribosomal stalk of the 50S ribosomal subunit. Forms a multimeric L10(L12)X complex, where L10 forms an elongated spine to which 2 to 4 L12 dimers bind in a sequential fashion. Binds GTP-bound translation factors.

In terms of biological role, forms part of the ribosomal stalk which helps the ribosome interact with GTP-bound translation factors. Is thus essential for accurate translation. The chain is Large ribosomal subunit protein bL12 from Synechococcus sp. (strain RCC307).